We begin with the raw amino-acid sequence, 260 residues long: Peptidase inhibitor 15-A (260 aa).

A signal peptide spans M1–A21. Residues L22–R62 constitute a propeptide that is removed on maturation. N-linked (GlcNAc...) asparagine glycans are attached at residues N37 and N126. One can recognise an SCP domain in the interval L73–Y213.

The protein belongs to the CRISP family.

It localises to the secreted. Its function is as follows. Serine protease inhibitor which displays weak inhibitory activity against trypsin. May play a role in facial patterning during embryonic development. In Danio rerio (Zebrafish), this protein is Peptidase inhibitor 15-A (pi15a).